The chain runs to 604 residues: Vacuolar protein sorting-associated protein 64 (604 aa).

The interval 1 to 89 is disordered; that stretch reads MVELEKRRRP…SVHQVSQQQQ (89 aa). Topologically, residues 1-578 are cytoplasmic; that stretch reads MVELEKRRRP…LGVVEGKRTR (578 aa). Polar residues predominate over residues 22-34; that stretch reads DQSNSQGMTKTPE. 2 stretches are compositionally biased toward low complexity: residues 44–57 and 77–89; these read RARS…SRSN and SPPS…QQQQ. The FHA domain occupies 185–257; the sequence is LKLGRPVTNS…NGTFVNGVKI (73 aa). A coiled-coil region spans residues 404 to 563; it reads NLINMIKTLT…EEKKDTEDTL (160 aa). A disordered region spans residues 539–561; it reads INNDNNAKVKQNDSREEKKDTED. A compositionally biased stretch (basic and acidic residues) spans 548–560; sequence KQNDSREEKKDTE. A helical; Anchor for type IV membrane protein membrane pass occupies residues 579 to 598; the sequence is VSKGMLFGVVAISFGLVATA. Over 599–604 the chain is Lumenal; the sequence is VKQLPQ.

As to quaternary structure, component of a complex at least composed of FAR3, FAR7, FAR8, FAR10, FAR11 and VPS64.

Its subcellular location is the endoplasmic reticulum membrane. Participates in the control of the reentry into the cell cycle following pheromone treatment. Involved in vacuolar protein sorting. The protein is Vacuolar protein sorting-associated protein 64 (VPS64) of Saccharomyces cerevisiae (strain ATCC 204508 / S288c) (Baker's yeast).